A 366-amino-acid polypeptide reads, in one-letter code: Glutathione S-transferase omega-like 3 (366 aa).

Cys46 is an active-site residue. The GST C-terminal domain maps to 197 to 349 (PRSLEAQITE…LGYTRSQPRV (153 aa)).

It belongs to the GST superfamily. Omega family.

The protein resides in the cytoplasm. The catalysed reaction is RX + glutathione = an S-substituted glutathione + a halide anion + H(+). Active as '1-Cys' thiol transferase against beta-hydroxyethyl disulfide (HED), as dehydroascorbate reductase and as dimethylarsinic acid reductase, while not active against the standard GST substrate 1-chloro-2,4-dinitrobenzene (CDNB). The sequence is that of Glutathione S-transferase omega-like 3 (GTO3) from Saccharomyces cerevisiae (strain ATCC 204508 / S288c) (Baker's yeast).